Here is a 726-residue protein sequence, read N- to C-terminus: Dipeptidyl-peptidase 5 (726 aa).

The first 19 residues, 1–19, serve as a signal peptide directing secretion; the sequence is MAAAKWLIASLAFASSGLA. Residues Asn96 and Asn252 are each glycosylated (N-linked (GlcNAc...) asparagine). A disordered region spans residues 269–291; sequence AEPINKRNGPRTPQGIEGASSSP. Ser558 acts as the Charge relay system in catalysis. Asn605 is a glycosylation site (N-linked (GlcNAc...) asparagine). Catalysis depends on charge relay system residues Asp641 and His673. An N-linked (GlcNAc...) asparagine glycan is attached at Asn699.

This sequence belongs to the peptidase S9C family.

It localises to the secreted. In terms of biological role, extracellular dipeptidyl-peptidase which removes N-terminal dipeptides sequentially from polypeptides having unsubstituted N-termini. Contributes to pathogenicity. In Trichophyton tonsurans (Scalp ringworm fungus), this protein is Dipeptidyl-peptidase 5 (DPP5).